Here is a 159-residue protein sequence, read N- to C-terminus: V-type proton ATPase 16 kDa proteolipid subunit c (159 aa).

Residues 1–11 (MSEEGSPMYSP) lie on the Lumenal side of the membrane. The helical transmembrane segment at 12–32 (FFGVMGAASAMVFSALGAAYG) threads the bilayer. Residues 33 to 54 (TAKSGVGISAMSVMRPELIMKC) lie on the Cytoplasmic side of the membrane. A helical membrane pass occupies residues 55–75 (IIPVVMAGIIAIYGLVVAVLI). Residues 76–93 (AGKLDEAPTYTLYQGFVH) lie on the Lumenal side of the membrane. Residues 94-114 (MGAGLSVGLSGLAAGFAIGIV) form a helical membrane-spanning segment. Residues 115-132 (GDAGVRGTAQQPRLYVGM) are Cytoplasmic-facing. Residues 133–153 (ILILIFAEVLGLYGLIVAIFL) form a helical membrane-spanning segment. Residues 154–159 (YTKTSS) lie on the Lumenal side of the membrane.

The protein belongs to the V-ATPase proteolipid subunit family. As to quaternary structure, V-ATPase is a heteromultimeric enzyme made up of two complexes: the ATP-hydrolytic V1 complex and the proton translocation V0 complex. The V1 complex consists of three catalytic AB heterodimers that form a heterohexamer, three peripheral stalks each consisting of EG heterodimers, one central rotor including subunits D and F, and the regulatory subunits C and H. The proton translocation complex V0 consists of the proton transport subunit a, a ring of proteolipid subunits c9c'', rotary subunit d, subunits e and f, and two accessory subunits.

The protein resides in the vacuole membrane. Proton-conducting pore forming subunit of the V0 complex of vacuolar(H+)-ATPase (V-ATPase), a multisubunit enzyme composed of a peripheral complex (V1) that hydrolyzes ATP and a membrane integral complex (V0) that translocates protons. V-ATPase is responsible for acidifying and maintaining the pH of intracellular compartments and in some cell types, is targeted to the plasma membrane, where it is responsible for acidifying the extracellular environment. The protein is V-type proton ATPase 16 kDa proteolipid subunit c of Nephrops norvegicus (Norway lobster).